Here is a 266-residue protein sequence, read N- to C-terminus: Energy-coupling factor transporter ATP-binding protein EcfA1 (266 aa).

One can recognise an ABC transporter domain in the interval 2–237 (IKLNNVTFRY…EKIIEIAKIA (236 aa)). 37-44 (GHNGSGKS) lines the ATP pocket.

It belongs to the ABC transporter superfamily. Energy-coupling factor EcfA family. Forms a stable energy-coupling factor (ECF) transporter complex composed of 2 membrane-embedded substrate-binding proteins (S component), 2 ATP-binding proteins (A component) and 2 transmembrane proteins (T component).

It localises to the cell membrane. Its function is as follows. ATP-binding (A) component of a common energy-coupling factor (ECF) ABC-transporter complex. Unlike classic ABC transporters this ECF transporter provides the energy necessary to transport a number of different substrates. This Mycoplasmopsis synoviae (strain 53) (Mycoplasma synoviae) protein is Energy-coupling factor transporter ATP-binding protein EcfA1.